Reading from the N-terminus, the 71-residue chain is MRGIILALLLAIAGSERTQIEPVFSESKTSVYNYEAVILNGFPESGLSRAGIKINCKVEISAYAQRSYFLK.

A signal peptide spans Met1–Ser15. The region spanning Phe24–Lys71 is the Vitellogenin domain.

As to expression, produced by the liver, secreted into the blood and then sequestered by receptor mediated endocytosis into growing oocytes, where it is generally cleaved, giving rise to the respective yolk components.

Its function is as follows. Precursor of the major egg-yolk proteins that are sources of nutrients during early development of oviparous organisms. The chain is Vitellogenin-A1 from Xenopus laevis (African clawed frog).